The sequence spans 173 residues: Disulfide bond formation protein B 2 (173 aa).

Residues 1-9 lie on the Cytoplasmic side of the membrane; the sequence is MSLAGSRLL. A helical transmembrane segment spans residues 10–26; sequence FSLVFLVGALASWAAFN. Residues 27–44 are Periplasmic-facing; it reads LQTGGGLESCSLWSVQRL. Residues 45–61 traverse the membrane as a helical segment; it reads LLLALGGVNLLAVIQGP. The Cytoplasmic segment spans residues 62–67; the sequence is GRVGRA. Residues 68-85 form a helical membrane-spanning segment; that stretch reads VYWGLNLLLGLLGVVTAG. Topologically, residues 86–142 are periplasmic; sequence RHVLLQNIPSEQLLACLPDMSFMLRQLSWWQALKLTFMGTSDCAEVTWTLLDMSLPE. Cys101 and Cys128 are oxidised to a cystine. Residues 143-161 traverse the membrane as a helical segment; sequence WSLLFFVIMLIFSGYRLWR. Over 162–173 the chain is Cytoplasmic; it reads QLRGARKAVALP.

The protein belongs to the DsbB family.

The protein resides in the cell inner membrane. Functionally, required for disulfide bond formation in some periplasmic proteins. Acts by oxidizing the DsbA protein. The protein is Disulfide bond formation protein B 2 of Pseudomonas fluorescens (strain ATCC BAA-477 / NRRL B-23932 / Pf-5).